We begin with the raw amino-acid sequence, 475 residues long: MSTPANGKGRISQVIGAVVDVEFDGELPSILNALETFNNGSRLVLEVAQHLGENTVRTIAMDSTEGLVRGQPVSDIGTPITVPVGPATLGRIMNVIGEPIDERGPVNADTYMPIHAQAPAFVDQATESEVLVTGIKVIDLLCPYAKGGKIGLFGGAGVGKTVLIMELVNNIAKLFGGYSVFAGVGERTREGNDLYHEMIESNVINLEGESRMSLVYGQMNEPPGARARVALTGLTQAEYFRDVEGKDVLFFVDNIFRFTQAGSEVSALLGRIPSAVGYQPTLATDMGALQERITSTNKGSITSVQAVYVPADDLTDPAPATSFAHLDATTVLNRAISEKGIYPAVDPLDSTSRILDPMVVGEEHYEVARGVQQILQKYKELQDIIAILGMDELSEDDKVTVARARKVERFLSQPFDVAQVFTGSPGVQVKLEDTIKGFKGLISGEFDHLPEPAFYMVGNIEEAKAKAAKLMADAA.

Residue glycine 154–threonine 161 participates in ATP binding.

It belongs to the ATPase alpha/beta chains family. F-type ATPases have 2 components, CF(1) - the catalytic core - and CF(0) - the membrane proton channel. CF(1) has five subunits: alpha(3), beta(3), gamma(1), delta(1), epsilon(1). CF(0) has three main subunits: a(1), b(2) and c(9-12). The alpha and beta chains form an alternating ring which encloses part of the gamma chain. CF(1) is attached to CF(0) by a central stalk formed by the gamma and epsilon chains, while a peripheral stalk is formed by the delta and b chains.

It localises to the cell inner membrane. The enzyme catalyses ATP + H2O + 4 H(+)(in) = ADP + phosphate + 5 H(+)(out). Its function is as follows. Produces ATP from ADP in the presence of a proton gradient across the membrane. The catalytic sites are hosted primarily by the beta subunits. In Hyphomonas neptunium (strain ATCC 15444), this protein is ATP synthase subunit beta.